We begin with the raw amino-acid sequence, 259 residues long: Polycomb group RING finger protein 1 (259 aa).

Residue Ala2 is modified to N-acetylalanine. Ser3 is subject to Phosphoserine. Lys24 participates in a covalent cross-link: Glycyl lysine isopeptide (Lys-Gly) (interchain with G-Cter in SUMO2). The RING-type zinc finger occupies 47–86 (CCLCAGYFVDATTITECLHTFCKSCIVKYLQTSKYCPMCN). Positions 86–247 (NIKIHETQPL…LSRWFGKPSP (162 aa)) are necessary for repressor activity. A Glycyl lysine isopeptide (Lys-Gly) (interchain with G-Cter in SUMO2) cross-link involves residue Lys88. Residues 150-255 (LPFSSFDHSK…SPLLLQYSVK (106 aa)) form a required for the interaction with the KDM2B-SKP1 heterodimeric complex region. The segment at 167–255 (EQLSLCLERL…SPLLLQYSVK (89 aa)) is RING-finger and WD40-associated ubiquitin-like domain (RAWUL); sufficient for interaction with BCOR and BCORL1.

In terms of assembly, interacts with BCORL1, forming heterodimers. The PCGF1-BCORL1 heterodimeric complex interacts with the KDM2B-SKP1 heterodimeric complex to form a homotetrameric polycomb repression complex 1 (PRC1.1). Component of the repressive BCOR complex containing a Polycomb group subcomplex at least composed of RYBP, RING1 and RNF2/RING2. Specifically interacts with BCOR, RING1 and RNF2/RING2. Component of a PRC1-like complex. Interacts with CBX6, CBX7 and CBX8. Interacts with DPPA4, NANOG, POU5F1 and RYBP.

The protein localises to the nucleus. Component of the Polycomb group (PcG) multiprotein BCOR complex, a complex required to maintain the transcriptionally repressive state of some genes, such as BCL6 and the cyclin-dependent kinase inhibitor, CDKN1A. Transcriptional repressor that may be targeted to the DNA by BCL6; this transcription repressor activity may be related to PKC signaling pathway. Represses CDKN1A expression by binding to its promoter, and this repression is dependent on the retinoic acid response element (RARE element). Promotes cell cycle progression and enhances cell proliferation as well. May have a positive role in tumor cell growth by down-regulating CDKN1A. Component of a Polycomb group (PcG) multiprotein PRC1-like complex, a complex class required to maintain the transcriptionally repressive state of many genes, including Hox genes, throughout development. PcG PRC1 complex acts via chromatin remodeling and modification of histones; it mediates monoubiquitination of histone H2A 'Lys-119', rendering chromatin heritably changed in its expressibility. Within the PRC1-like complex, regulates RNF2 ubiquitin ligase activity. Regulates the expression of DPPA4 and NANOG in the NT2 embryonic carcinoma cells. In Mus musculus (Mouse), this protein is Polycomb group RING finger protein 1 (Pcgf1).